A 181-amino-acid polypeptide reads, in one-letter code: uncharacterized protein (181 aa).

The chain crosses the membrane as a helical span at residues 133-153 (MCVCVHVCACVYVCMCVLVCM).

It localises to the membrane. This is an uncharacterized protein from Homo sapiens (Human).